The following is a 498-amino-acid chain: Nucleoprotein (498 aa).

A Unconventional nuclear localization signal motif is present at residues 1–18 (MASQGTKRSYEQMETGGE). Positions 1 to 22 (MASQGTKRSYEQMETGGERQNA) are disordered. Positions 198–216 (KRGINDRNFWRGENGRRTR) match the Bipartite nuclear localization signal motif.

The protein belongs to the influenza viruses nucleoprotein family. In terms of assembly, homomultimerizes to form the nucleocapsid. May bind host exportin-1/XPO1. Binds to viral genomic RNA. Protein-RNA contacts are mediated by a combination of electrostatic interactions between positively charged residues and the phosphate backbone and planar interactions between aromatic side chains and bases. In terms of processing, late in virus-infected cells, may be cleaved from a 56-kDa protein to a 53-kDa protein by a cellular caspase. This cleavage might be a marker for the onset of apoptosis in infected cells or have a specific function in virus host interaction.

It localises to the virion. It is found in the host nucleus. Functionally, encapsidates the negative strand viral RNA, protecting it from nucleases. The encapsidated genomic RNA is termed the ribonucleoprotein (RNP) and serves as template for transcription and replication. The RNP needs to be localized in the host nucleus to start an infectious cycle, but is too large to diffuse through the nuclear pore complex. NP comprises at least 2 nuclear localization signals that are responsible for the active RNP import into the nucleus through cellular importin alpha/beta pathway. Later in the infection, nclear export of RNPs are mediated through viral proteins NEP interacting with M1 which binds nucleoproteins. It is possible that nucleoprotein binds directly host exportin-1/XPO1 and plays an active role in RNPs nuclear export. M1 interaction with RNP seems to hide nucleoprotein's nuclear localization signals. Soon after a virion infects a new cell, M1 dissociates from the RNP under acidification of the virion driven by M2 protein. Dissociation of M1 from RNP unmasks nucleoprotein's nuclear localization signals, targeting the RNP to the nucleus. The polypeptide is Nucleoprotein (Influenza A virus (strain A/Grey teal/Australia/2/1979 H4N4)).